Consider the following 583-residue polypeptide: Pre-mRNA-processing protein PRP40 (583 aa).

WW domains follow at residues 1-31 and 42-72; these read MSIW…KPKE and ENGW…IPAF. FF domains follow at residues 132–188, 201–257, 262–332, 354–413, 427–488, and 491–552; these read KEEA…YLSN, TSKF…YIDT, QKES…YLKI, RDRI…FVDE, QTLI…KLQN, and RILE…FKPE. Phosphothreonine is present on T576.

Belongs to the PRPF40 family. Interacts with CRM1, MSL5, PRP8, and the RNA polymerase II largest subunit (RPB1). MSL5, MUD2 and PRP40 interact to form the commitment complex 2 (CC2), a precursor of mature spliceosomes.

The protein localises to the nucleus. Required for pre-spliceosome formation, which is the first step of pre-mRNA splicing. This protein is associated with snRNP U1. Two commitment complexes, CC1 and CC2, have been defined in yeast. CC1 is a basal complex dependent only on the 5' splice site. CC2 is a complex of lower mobility and is dependent on a branchpoint as well as a 5' splice site region. This protein is involved in CC2 formation where it binds to the branchpoint binding protein MSL5, bridging the U1 snRNP-associated 5' splice site and the MSL5-associated branch point 3' intron splice site. This Saccharomyces cerevisiae (strain ATCC 204508 / S288c) (Baker's yeast) protein is Pre-mRNA-processing protein PRP40 (PRP40).